The primary structure comprises 492 residues: Cyclic di-GMP phosphodiesterase VC_1295 (492 aa).

Transmembrane regions (helical) follow at residues 14–34, 49–69, 80–100, 111–131, 160–180, and 205–225; these read IYHA…FALY, EIAT…HTLL, FIQL…LYYN, LKVL…LQLS, LIGL…MVAI, and EFAF…VLWS. The HAMP domain occupies 226-278; it reads RMMKEILDHQERSLQAVTQGNLQVRLPVYSNDELGNVAMLTNQMLDSLEATQN. The HD-GYP domain maps to 280–490; that stretch reads VKTTRDVAIV…FVAIAAHFKD (211 aa).

It is found in the cell inner membrane. The enzyme catalyses 3',3'-c-di-GMP + 2 H2O = 2 GMP + 2 H(+). Phosphodiesterase (PDE) that catalyzes the hydrolysis of cyclic diguanylate (c-di-GMP) to GMP in vitro. Increases motility and decreases biofilm formation in vivo. The sequence is that of Cyclic di-GMP phosphodiesterase VC_1295 from Vibrio cholerae serotype O1 (strain ATCC 39315 / El Tor Inaba N16961).